Reading from the N-terminus, the 674-residue chain is Sodium/myo-inositol cotransporter 2 (674 aa).

Over 1–27 (MESSPSSPQPTQSDPLAVFPQRTLEPA) the chain is Extracellular. Residues 28–48 (DIAVLVLYFLFVLAVGLWSTV) traverse the membrane as a helical segment. The Cytoplasmic portion of the chain corresponds to 49-56 (KTRRDTVK). A helical membrane pass occupies residues 57–77 (GYFLAGGDMVWWPVGASLFAS). Topologically, residues 78-102 (NVGSGHFVGLAGSGAAAGLSVTAYE) are extracellular. The helical transmembrane segment at 103 to 123 (FNGIFSVLMLAWIFLPIYIAG) threads the bilayer. Residues 124-140 (QVTTMPEYLRKRFGGSR) are Cytoplasmic-facing. Residues 141 to 161 (IPITLAVLYLFIYIFTKISVD) form a helical membrane-spanning segment. At 162–180 (MYAGAIFIQQSLHLNLYLA) the chain is on the extracellular side. The chain crosses the membrane as a helical span at residues 181–201 (IVGLLAITALYTIAGGLAAVI). Over 202 to 208 (YTDALQT) the chain is Cytoplasmic. Residues 209-229 (LIMLIGALTLMGYSFAAVGGM) form a helical membrane-spanning segment. Residues 230-272 (EGLKEKYFLALASNRSGNSSCGLPREDAFHIFRDPLTSDLPWP) lie on the Extracellular side of the membrane. A helical transmembrane segment spans residues 273 to 293 (GILFGMSIPSLWYWCTDQVIV). The Cytoplasmic portion of the chain corresponds to 294–308 (QRTLAAKNLSHAKGG). The helical transmembrane segment at 309-329 (SLMAAYLKVLPLFIMVFPGMV) threads the bilayer. Residues 330–374 (SRVLFPDQVACADPEICQKVCSNPAGCSDIAYPKLVLELLPMGLR) are Extracellular-facing. A helical transmembrane segment spans residues 375–397 (GLMMAVMVAALMSSLTSIFNSAS). The Cytoplasmic portion of the chain corresponds to 398–418 (TIFTMDLWNHLRPRASERELM). Residues 419-439 (IVGRVFVLLLVLVSILWIPVV) traverse the membrane as a helical segment. Residues 440-446 (QASQGGQ) are Extracellular-facing. Residues 447-467 (LFIYIQSISSYLQPPVAVVFI) traverse the membrane as a helical segment. The Cytoplasmic segment spans residues 468 to 479 (MGCFWKRTNEKG). A helical transmembrane segment spans residues 480 to 500 (AFSGLILGLLLGLVRLVLDFI). Residues 501–518 (YPQPRCDQPDERPAVVRD) lie on the Extracellular side of the membrane. A helical transmembrane segment spans residues 519–539 (VHYLYFSMILSSVTLVTVSTV). Residues 540–653 (SWCTAPPTQE…SLEEIPLVKT (114 aa)) are Cytoplasmic-facing. The helical transmembrane segment at 654–674 (LLDINLIVCISCAIFLWGYFA) threads the bilayer.

The protein belongs to the sodium:solute symporter (SSF) (TC 2.A.21) family.

The protein resides in the membrane. It localises to the apical cell membrane. It catalyses the reaction myo-inositol(out) + 2 Na(+)(out) = myo-inositol(in) + 2 Na(+)(in). The enzyme catalyses 1D-chiro-inositol(out) + 2 Na(+)(out) = 1D-chiro-inositol(in) + 2 Na(+)(in). It carries out the reaction D-glucose(out) + 2 Na(+)(out) = D-glucose(in) + 2 Na(+)(in). The catalysed reaction is D-xylose(out) + 2 Na(+)(out) = D-xylose(in) + 2 Na(+)(in). With respect to regulation, MI transport activity inhibited by D-chiro-inositol (DCI), phlorizin (Pz) and sodium (Na(+)). Insulin increases D-chiro-inositol uptake. Its function is as follows. Involved in the sodium-dependent cotransport of myo-inositol (MI) with a Na(+):MI stoichiometry of 2:1. Exclusively responsible for apical MI transport and absorption in intestine. Can also transport D-chiro-inositol (DCI) but not L-fucose. Exhibits stereospecific cotransport of both D-glucose and D-xylose. May induce apoptosis through the TNF-alpha, PDCD1 pathway. May play a role in the regulation of MI concentration in serum, involving reabsorption in at least the proximal tubule of the kidney. The sequence is that of Sodium/myo-inositol cotransporter 2 from Sus scrofa (Pig).